The primary structure comprises 22 residues: Lantibiotic mutacin B-Ny266 (22 aa).

Positions 3 to 7 (SWSFC) form a cross-link, lanthionine (Ser-Cys). Residue Ser-5 is modified to 2,3-didehydroalanine (Ser). A cross-link (beta-methyllanthionine (Thr-Cys)) is located at residues 8-11 (TPGC). Thr-14 carries the post-translational modification 2,3-didehydrobutyrine. A cross-link (lanthionine (Ser-Cys)) is located at residues 16–21 (SFNSYC). A cross-link (S-(2-aminovinyl)-D-cysteine (Ser-Cys)) is located at residues 19–22 (SYCC).

Post-translationally, maturation of lantibiotics involves the enzymatic conversion of Thr, and Ser into dehydrated AA and the formation of thioether bonds with cysteine. The C-terminal lanthionine undergoes decarboxylation. This is followed by membrane translocation and cleavage of the modified precursor. In terms of processing, it is not established whether the 2,3-didehydrobutyrine is the E- or Z-isomer.

Its function is as follows. Lanthionine-containing peptide antibiotic (lantibiotic) active on Gram-positive bacteria. The bactericidal activity of lantibiotics is based on depolarization of energized bacterial cytoplasmic membranes, initiated by the formation of aqueous transmembrane pores. This Streptococcus mutans protein is Lantibiotic mutacin B-Ny266.